Reading from the N-terminus, the 447-residue chain is MSDYPKTPQAAHLTALVELISSSVNEVISVYSAAGRDIPSLDSLEEGFLETPATTPPGLRHARQIIEAACAQLCVTIAQPGDCIVNKAFAYTESACLQVAANAKISDFLADKPDGLHTEELAKLSGVDAGKLGQVLRFLATKHVYREVRPNVYANNRLSVKLMSSDPVSCNVGVCTGELFQAATAAWDTLSDKEYGPSYLPTKTAFRKVHGATFFEYYETHVRLNLPRFSGAMVGWGNITDRGLLPQMYEWQRLEPGATICDVGGNNGHATLDLVKEYPMISVIVQDLESLRPRWSDLWARELPDAIQDGRTSFVPIDFFRDIPVRNCDVYYIRHILHDWPDASCVQILRNVKEAMQPSSRVLIHEYVLQQTTRDDVTVENDSAPEPLLPNYGNGRIRRYYQDITMLLGLNSKERTLQEFIDIGAQAGLKFVKLWDGGQTALVEFSC.

Residues glycine 264–glycine 265, aspartate 287, aspartate 318–phenylalanine 319, and arginine 334 each bind S-adenosyl-L-methionine. Histidine 338 serves as the catalytic Proton acceptor.

It belongs to the class I-like SAM-binding methyltransferase superfamily. Cation-independent O-methyltransferase family. COMT subfamily.

In terms of biological role, S-adenosyl-L-methionine-dependent methyltransferase that preferentially catalyzes the methylation of 3-OH phenolic compounds like isovanillic acid and 3-OH-4-Met cinnamic acid. May play a role in promoting lignin degradation by methylating and inactivating free-hydroxyl phenolic compounds, products of lignin cleavage which are known inhibitors of lignin peroxidases. The sequence is that of 3-O-methyltransferase 2 from Phanerochaete chrysosporium (strain RP-78 / ATCC MYA-4764 / FGSC 9002) (White-rot fungus).